Here is a 319-residue protein sequence, read N- to C-terminus: Dehydrogenase/reductase SDR family member 9 (319 aa).

Positions 1–20 (MLFWLLALLFLCAFLWNYKG) are cleaved as a signal peptide. NAD(+)-binding positions include 34-58 (ITGCDTGFGNLAARTFDKKGFRVIA) and Asp83. Ser164 serves as a coordination point for substrate. The Proton acceptor role is filled by Tyr176. NAD(+) is bound at residue Lys180.

It belongs to the short-chain dehydrogenases/reductases (SDR) family. In terms of assembly, homotetramer.

Its subcellular location is the microsome membrane. The protein localises to the endoplasmic reticulum membrane. The catalysed reaction is 3beta-hydroxy-5alpha-pregnane-20-one + NAD(+) = 5alpha-pregnane-3,20-dione + NADH + H(+). It carries out the reaction 17beta-hydroxy-5alpha-androstan-3-one + NAD(+) = 5alpha-androstan-3,17-dione + NADH + H(+). The enzyme catalyses androsterone + NAD(+) = 5alpha-androstan-3,17-dione + NADH + H(+). It catalyses the reaction 5alpha-androstane-3alpha,17beta-diol + NAD(+) = 17beta-hydroxy-5alpha-androstan-3-one + NADH + H(+). The catalysed reaction is all-trans-retinol + NAD(+) = all-trans-retinal + NADH + H(+). It carries out the reaction 3alpha-hydroxy-5alpha-pregnan-20-one + NAD(+) = 5alpha-pregnane-3,20-dione + NADH + H(+). Functionally, 3-alpha-hydroxysteroid dehydrogenase that converts 3-alpha-tetrahydroprogesterone (allopregnanolone) to dihydroxyprogesterone and 3-alpha-androstanediol to dihydroxyprogesterone. Also plays a role in the biosynthesis of retinoic acid. Can utilize both NADH and NADPH. This is Dehydrogenase/reductase SDR family member 9 (Dhrs9) from Mus musculus (Mouse).